We begin with the raw amino-acid sequence, 473 residues long: Zinc finger and SCAN domain-containing protein 21 (473 aa).

Residue Lys-27 forms a Glycyl lysine isopeptide (Lys-Gly) (interchain with G-Cter in SUMO2) linkage. The SCAN box domain occupies 45–127 (RQRFRQFGYH…TLLEDLEREL (83 aa)). The interval 127–167 (LDEPGHQVSTPPNEQKPVWEKISSSGTAKESPSSMQPQPLE) is disordered. Polar residues predominate over residues 148 to 165 (ISSSGTAKESPSSMQPQP). Glycyl lysine isopeptide (Lys-Gly) (interchain with G-Cter in SUMO2) cross-links involve residues Lys-221 and Lys-232. Residues 244-272 (LENEKGTKPPLQEAGSKKGRESVPTKPTP) form a disordered region. Positions 258-272 (GSKKGRESVPTKPTP) are enriched in basic and acidic residues. 7 consecutive C2H2-type zinc fingers follow at residues 277–299 (YICA…RRTH), 305–327 (YVCT…YRTH), 333–354 (YDCK…QRMH), 360–382 (YQCK…YRIH), 388–410 (YQCN…QRLH), 416–438 (YKCK…HRIH), and 444–466 (YWCH…QRVH). Residue Lys-349 forms a Glycyl lysine isopeptide (Lys-Gly) (interchain with G-Cter in SUMO2) linkage.

This sequence belongs to the krueppel C2H2-type zinc-finger protein family.

Its subcellular location is the nucleus. Functionally, strong transcriptional activator. Plays an important role in spermatogenesis; essential for the progression of meiotic prophase I in spermatocytes. This Pan troglodytes (Chimpanzee) protein is Zinc finger and SCAN domain-containing protein 21 (ZSCAN21).